The chain runs to 330 residues: Atypical chemokine receptor 1 (330 aa).

Topologically, residues 1–57 (MGNCLYPVADDNSTKLAIKEDFLIDFPEDYYPDYNETDVEAAAPCHSCSLLNYSSLP) are extracellular. 3 N-linked (GlcNAc...) asparagine glycosylation sites follow: Asn-12, Asn-35, and Asn-52. Cystine bridges form between Cys-45–Cys-270 and Cys-123–Cys-189. The helical transmembrane segment at 58 to 78 (FFILVSILGILASGTILYALL) threads the bilayer. The Cytoplasmic segment spans residues 79 to 89 (RPLFRWQLYQD). Residues 90-110 (RSTLVQLAVGSALFSIVVPIL) traverse the membrane as a helical segment. The Extracellular portion of the chain corresponds to 111–123 (ARGLSGALITSLC). The chain crosses the membrane as a helical span at residues 124 to 147 (HLAHLVAYGSAFAQALLIGYHACL). Over 148-160 (GPQLGAGQVPGLR) the chain is Cytoplasmic. A helical membrane pass occupies residues 161–181 (LGVTVGLWGVAALLSLPVVLG). At 182 to 201 (SDTSQGLCTVTFSGEWETLR) the chain is on the extracellular side. The helical transmembrane segment at 202-222 (YIHAAACFAIFVLLPLGLLGT) threads the bilayer. Over 223–238 (KGLKTVLGRAPCPWVD) the chain is Cytoplasmic. The chain crosses the membrane as a helical span at residues 239-259 (VLWVWFIFWWPQGMTLGLDSL). At 260–281 (VRSKAIVVSTCPAQQALDMLLD) the chain is on the extracellular side. A helical membrane pass occupies residues 282 to 302 (VAEALAILHCVATPLLLAWVC). Topologically, residues 303–330 (YQATHTSPPSLPLPTTQTSHLDTLGGKS) are cytoplasmic.

Belongs to the G-protein coupled receptor 1 family. Atypical chemokine receptor subfamily.

Its subcellular location is the early endosome. It is found in the recycling endosome. It localises to the membrane. In terms of biological role, atypical chemokine receptor that controls chemokine levels and localization via high-affinity chemokine binding that is uncoupled from classic ligand-driven signal transduction cascades, resulting instead in chemokine sequestration, degradation, or transcytosis. Also known as interceptor (internalizing receptor) or chemokine-scavenging receptor or chemokine decoy receptor. Has a promiscuous chemokine-binding profile, interacting with inflammatory chemokines of both the CXC and the CC subfamilies but not with homeostatic chemokines. Acts as a receptor for chemokines including CCL2, CCL5, CCL7, CCL11, CCL13, CCL14, CCL17, CXCL5, CXCL6, IL8/CXCL8, CXCL11, GRO, RANTES, MCP-1 and TARC. May regulate chemokine bioavailability and, consequently, leukocyte recruitment through two distinct mechanisms: when expressed in endothelial cells, it sustains the abluminal to luminal transcytosis of tissue-derived chemokines and their subsequent presentation to circulating leukocytes; when expressed in erythrocytes, serves as blood reservoir of cognate chemokines but also as a chemokine sink, buffering potential surges in plasma chemokine levels. The protein is Atypical chemokine receptor 1 (ACKR1) of Bos taurus (Bovine).